Reading from the N-terminus, the 517-residue chain is Protein NETWORKED 4B (517 aa).

Disordered stretches follow at residues 1 to 29 and 101 to 159; these read MASS…DSHN and LQKN…EDGD. Residues 10 to 21 show a composition bias toward basic residues; sequence KQFKRSMTKKSH. In terms of domain architecture, NAB spans 21 to 101; sequence HSWWWDSHNC…ERYDQASGEL (81 aa). A compositionally biased stretch (low complexity) spans 107 to 119; it reads SEIQSQSSLEISS. Positions 121–135 are enriched in basic and acidic residues; the sequence is TKEKLSRRQSSHKEE. Residues 156 to 486 adopt a coiled-coil conformation; that stretch reads EDGDEALIRR…EQKREAIRQL (331 aa).

The protein belongs to the NET family.

In terms of biological role, plant-specific actin binding protein. May be part of a membrane-cytoskeletal adapter complex. In Arabidopsis thaliana (Mouse-ear cress), this protein is Protein NETWORKED 4B.